Reading from the N-terminus, the 187-residue chain is Elongation factor P (187 aa).

It belongs to the elongation factor P family.

The protein resides in the cytoplasm. The protein operates within protein biosynthesis; polypeptide chain elongation. Its function is as follows. Involved in peptide bond synthesis. Stimulates efficient translation and peptide-bond synthesis on native or reconstituted 70S ribosomes in vitro. Probably functions indirectly by altering the affinity of the ribosome for aminoacyl-tRNA, thus increasing their reactivity as acceptors for peptidyl transferase. In Chromobacterium violaceum (strain ATCC 12472 / DSM 30191 / JCM 1249 / CCUG 213 / NBRC 12614 / NCIMB 9131 / NCTC 9757 / MK), this protein is Elongation factor P.